A 178-amino-acid polypeptide reads, in one-letter code: ATP synthase subunit b, chloroplastic (178 aa).

The helical transmembrane segment at 26-46 (TNLINIIILLIILFYFLKGLL) threads the bilayer.

It belongs to the ATPase B chain family. In terms of assembly, F-type ATPases have 2 components, F(1) - the catalytic core - and F(0) - the membrane proton channel. F(1) has five subunits: alpha(3), beta(3), gamma(1), delta(1), epsilon(1). F(0) has four main subunits: a(1), b(1), b'(1) and c(10-14). The alpha and beta chains form an alternating ring which encloses part of the gamma chain. F(1) is attached to F(0) by a central stalk formed by the gamma and epsilon chains, while a peripheral stalk is formed by the delta, b and b' chains.

It is found in the plastid. It localises to the chloroplast thylakoid membrane. In terms of biological role, f(1)F(0) ATP synthase produces ATP from ADP in the presence of a proton or sodium gradient. F-type ATPases consist of two structural domains, F(1) containing the extramembraneous catalytic core and F(0) containing the membrane proton channel, linked together by a central stalk and a peripheral stalk. During catalysis, ATP synthesis in the catalytic domain of F(1) is coupled via a rotary mechanism of the central stalk subunits to proton translocation. Its function is as follows. Component of the F(0) channel, it forms part of the peripheral stalk, linking F(1) to F(0). This Vaucheria litorea (Yellow-green alga) protein is ATP synthase subunit b, chloroplastic.